Reading from the N-terminus, the 63-residue chain is Large ribosomal subunit protein uL30 (63 aa).

It belongs to the universal ribosomal protein uL30 family. As to quaternary structure, part of the 50S ribosomal subunit.

The sequence is that of Large ribosomal subunit protein uL30 from Rickettsia akari (strain Hartford).